The chain runs to 289 residues: Ribosomal RNA small subunit methyltransferase A (289 aa).

6 residues coordinate S-adenosyl-L-methionine: N28, L30, G55, E76, D101, and N125.

Belongs to the class I-like SAM-binding methyltransferase superfamily. rRNA adenine N(6)-methyltransferase family. RsmA subfamily.

It localises to the cytoplasm. It catalyses the reaction adenosine(1518)/adenosine(1519) in 16S rRNA + 4 S-adenosyl-L-methionine = N(6)-dimethyladenosine(1518)/N(6)-dimethyladenosine(1519) in 16S rRNA + 4 S-adenosyl-L-homocysteine + 4 H(+). In terms of biological role, specifically dimethylates two adjacent adenosines (A1518 and A1519) in the loop of a conserved hairpin near the 3'-end of 16S rRNA in the 30S particle. May play a critical role in biogenesis of 30S subunits. The chain is Ribosomal RNA small subunit methyltransferase A from Clostridioides difficile (strain 630) (Peptoclostridium difficile).